The primary structure comprises 373 residues: uncharacterized protein (373 aa).

The chain crosses the membrane as a helical span at residues 180-202 (YYVVALGTLALGSILGYTAKYVW).

It is found in the membrane. This is an uncharacterized protein from Rickettsia prowazekii (strain Madrid E).